The chain runs to 200 residues: MSQVTDMRSNSQGLSLTDSVYERLLSERIIFLGSEVNDEIANRLCAQILLLAAEDASKDISLYINSPGGSISAGMAIYDTMVLAPCDIATYAMGMAASMGEFLLAAGTKGKRYALPHARILMHQPLGGVTGSAADIAIQAEQFAVIKKEMFRLNAEFTGQPIERIEADSDRDRWFTAAEALEYGFVDHIITRAHVNGEAQ.

Ser-98 serves as the catalytic Nucleophile. Residue His-123 is part of the active site.

Belongs to the peptidase S14 family. In terms of assembly, fourteen ClpP subunits assemble into 2 heptameric rings which stack back to back to give a disk-like structure with a central cavity, resembling the structure of eukaryotic proteasomes.

Its subcellular location is the cytoplasm. It catalyses the reaction Hydrolysis of proteins to small peptides in the presence of ATP and magnesium. alpha-casein is the usual test substrate. In the absence of ATP, only oligopeptides shorter than five residues are hydrolyzed (such as succinyl-Leu-Tyr-|-NHMec, and Leu-Tyr-Leu-|-Tyr-Trp, in which cleavage of the -Tyr-|-Leu- and -Tyr-|-Trp bonds also occurs).. Functionally, cleaves peptides in various proteins in a process that requires ATP hydrolysis. Has a chymotrypsin-like activity. Plays a major role in the degradation of misfolded proteins. The chain is ATP-dependent Clp protease proteolytic subunit 1 from Mycobacterium bovis (strain ATCC BAA-935 / AF2122/97).